The primary structure comprises 300 residues: Glutamyl-Q tRNA(Asp) synthetase (300 aa).

L-glutamate contacts are provided by residues 14–18 (RFAPT) and E50. Positions 17 to 27 (PTPSGFLHFGS) match the 'HIGH' region motif. C106, C108, Y120, and C124 together coordinate Zn(2+). Residues Y177 and R195 each coordinate L-glutamate. Residues 233 to 237 (KLGKS) carry the 'KMSKS' region motif. Position 236 (K236) interacts with ATP.

It belongs to the class-I aminoacyl-tRNA synthetase family. GluQ subfamily. It depends on Zn(2+) as a cofactor.

Its function is as follows. Catalyzes the tRNA-independent activation of glutamate in presence of ATP and the subsequent transfer of glutamate onto a tRNA(Asp). Glutamate is transferred on the 2-amino-5-(4,5-dihydroxy-2-cyclopenten-1-yl) moiety of the queuosine in the wobble position of the QUC anticodon. The chain is Glutamyl-Q tRNA(Asp) synthetase from Pseudomonas putida (strain ATCC 700007 / DSM 6899 / JCM 31910 / BCRC 17059 / LMG 24140 / F1).